Here is a 188-residue protein sequence, read N- to C-terminus: Peptidyl-tRNA hydrolase (188 aa).

Phe-15 contributes to the tRNA binding site. The Proton acceptor role is filled by His-20. TRNA is bound by residues Tyr-64, Asn-66, and Asn-112.

The protein belongs to the PTH family. Monomer.

It is found in the cytoplasm. The catalysed reaction is an N-acyl-L-alpha-aminoacyl-tRNA + H2O = an N-acyl-L-amino acid + a tRNA + H(+). In terms of biological role, hydrolyzes ribosome-free peptidyl-tRNAs (with 1 or more amino acids incorporated), which drop off the ribosome during protein synthesis, or as a result of ribosome stalling. Its function is as follows. Catalyzes the release of premature peptidyl moieties from peptidyl-tRNA molecules trapped in stalled 50S ribosomal subunits, and thus maintains levels of free tRNAs and 50S ribosomes. This is Peptidyl-tRNA hydrolase from Borrelia duttonii (strain Ly).